The sequence spans 968 residues: Protein translocase subunit SecA (968 aa).

ATP-binding positions include Gln99, 117-121 (GEGKT), and Asp631.

The protein belongs to the SecA family. As to quaternary structure, monomer and homodimer. Part of the essential Sec protein translocation apparatus which comprises SecA, SecYEG and auxiliary proteins SecDF. Other proteins may also be involved.

The protein resides in the cell inner membrane. Its subcellular location is the cytoplasm. It catalyses the reaction ATP + H2O + cellular proteinSide 1 = ADP + phosphate + cellular proteinSide 2.. In terms of biological role, part of the Sec protein translocase complex. Interacts with the SecYEG preprotein conducting channel. Has a central role in coupling the hydrolysis of ATP to the transfer of proteins into and across the cell membrane, serving as an ATP-driven molecular motor driving the stepwise translocation of polypeptide chains across the membrane. The polypeptide is Protein translocase subunit SecA (Chlamydia muridarum (strain MoPn / Nigg)).